The chain runs to 572 residues: Proline--tRNA ligase (572 aa).

The protein belongs to the class-II aminoacyl-tRNA synthetase family. ProS type 1 subfamily. In terms of assembly, homodimer.

It is found in the cytoplasm. It catalyses the reaction tRNA(Pro) + L-proline + ATP = L-prolyl-tRNA(Pro) + AMP + diphosphate. Functionally, catalyzes the attachment of proline to tRNA(Pro) in a two-step reaction: proline is first activated by ATP to form Pro-AMP and then transferred to the acceptor end of tRNA(Pro). As ProRS can inadvertently accommodate and process non-cognate amino acids such as alanine and cysteine, to avoid such errors it has two additional distinct editing activities against alanine. One activity is designated as 'pretransfer' editing and involves the tRNA(Pro)-independent hydrolysis of activated Ala-AMP. The other activity is designated 'posttransfer' editing and involves deacylation of mischarged Ala-tRNA(Pro). The misacylated Cys-tRNA(Pro) is not edited by ProRS. In Shewanella amazonensis (strain ATCC BAA-1098 / SB2B), this protein is Proline--tRNA ligase.